The sequence spans 473 residues: ATP synthase subunit beta (473 aa).

153–160 (GGAGVGKT) serves as a coordination point for ATP.

It belongs to the ATPase alpha/beta chains family. As to quaternary structure, F-type ATPases have 2 components, CF(1) - the catalytic core - and CF(0) - the membrane proton channel. CF(1) has five subunits: alpha(3), beta(3), gamma(1), delta(1), epsilon(1). CF(0) has three main subunits: a(1), b(2) and c(9-12). The alpha and beta chains form an alternating ring which encloses part of the gamma chain. CF(1) is attached to CF(0) by a central stalk formed by the gamma and epsilon chains, while a peripheral stalk is formed by the delta and b chains.

It localises to the cell inner membrane. The enzyme catalyses ATP + H2O + 4 H(+)(in) = ADP + phosphate + 5 H(+)(out). Its function is as follows. Produces ATP from ADP in the presence of a proton gradient across the membrane. The catalytic sites are hosted primarily by the beta subunits. This chain is ATP synthase subunit beta, found in Rickettsia rickettsii (strain Iowa).